The chain runs to 1247 residues: uncharacterized protein (1247 aa).

Disordered stretches follow at residues 25 to 141 (KYNN…HSPP), 169 to 431 (AANN…QQPQ), 472 to 667 (QQQP…PSSS), 738 to 770 (NSNS…SEPI), 807 to 857 (YSNR…QNIE), 869 to 1087 (GKNF…NNNN), 1099 to 1122 (STLN…ESQQ), and 1139 to 1162 (QQQQ…KGDG). Residues 26 to 125 (YNNSNNYNNN…SNNSINSNSY (100 aa)) are compositionally biased toward low complexity. Residues 126–139 (KVNTPTQNGKSSHS) are compositionally biased toward polar residues. Low complexity-rich tracts occupy residues 169 to 178 (AANNGSSNSS), 185 to 223 (SNSN…NYNS), and 230 to 341 (NNNN…YSNS). Residues 342–356 (KYNQQKSYNNAPHQL) show a composition bias toward polar residues. Composition is skewed to low complexity over residues 363 to 375 (NSYY…NNGN), 385 to 394 (GSGNSSNSNG), 409 to 431 (QSQS…QQPQ), and 472 to 484 (QQQP…QQQQ). The span at 511–522 (GLNNSLNGQTDL) shows a compositional bias: polar residues. 6 stretches are compositionally biased toward low complexity: residues 523 to 544 (NNSN…TNNN), 553 to 628 (YNYN…VGSN), 655 to 667 (TPSS…PSSS), 738 to 759 (NSNS…NNNH), 807 to 855 (YSNR…DSQN), and 871 to 928 (NFNN…ENNN). The span at 929-942 (GDVFSNGFSTWTPK) shows a compositional bias: polar residues. Residues 943–983 (SGSNSLNNSQNNLSNGQNSSNNSQNNLNNSQNSLNSSGNHH) are compositionally biased toward low complexity. Residues 984–995 (SNYHGHNNHHHY) show a composition bias toward basic residues. Residues 996–1021 (NNNNNNNNNNNNNNNNNNNNNNNGNG) show a composition bias toward low complexity. Positions 1026-1044 (YYNNKYQQKSPQHQSSNSV) are enriched in polar residues. Residues 1047–1060 (IPPPGFSTIAPPPG) show a composition bias toward pro residues. The span at 1064-1087 (NNNNNNNNNNNNNNNKNNNSNNNN) shows a compositional bias: low complexity. The segment covering 1099 to 1108 (STLNNSQDDS) has biased composition (polar residues). Low complexity predominate over residues 1110 to 1122 (QQEQEQQEQESQQ).

This is an uncharacterized protein from Dictyostelium discoideum (Social amoeba).